A 167-amino-acid polypeptide reads, in one-letter code: Leukotoxin-activating lysine-acyltransferase LktC serotype A1 (167 aa).

Catalysis depends on residues His-22 and Asp-91.

The protein belongs to the RTX toxin acyltransferase family.

The protein localises to the cytoplasm. It catalyses the reaction a fatty acyl-[ACP] + L-lysyl-[protein] = N(6)-(fatty acyl)-L-lysyl-[protein] + holo-[ACP] + H(+). In terms of biological role, involved in fatty acylation of the protoxin (LktA) at two internal lysine residues, thereby converting it to the active toxin. This Mannheimia haemolytica (Pasteurella haemolytica) protein is Leukotoxin-activating lysine-acyltransferase LktC serotype A1 (lktC).